A 621-amino-acid polypeptide reads, in one-letter code: Glutathione-regulated potassium-efflux system protein KefC (621 aa).

13 helical membrane passes run 4–24 (HTLIQALIYLGAAALIVPIAV), 26–46 (LGLGSVLGYLIAGCIIGPWAL), 54–74 (AILHFAEIGVVLMLFVIGLEL), 90–110 (GALQMVACGVLIGLFCMLLGL), 114–134 (VAELIGMTLALSSTAIAMQAM), 149–169 (FAVLLFQDIAAIPLVAMIPLL), 178–198 (LMAFALSALKVAAALALVVVL), 218–237 (VFSAVALFLVFGFGLLLEEV), 238–257 (GLSMAMGAFLAGVLLASSEY), 270–290 (GLLLGLFFIGVGMSIDFGTLV), 294–314 (LRIVILLVGFLAIKMLMLWLI), 326–346 (RWFAVLLGQGSEFAFVVFGAA), and 359–379 (ALTLAVALSMAATPILLVLLT). The 120-residue stretch at 399-518 (QPRVIVAGFG…AGVEAPERET (120 aa)) folds into the RCK N-terminal domain. The tract at residues 598-621 (GWQGTEEGRHTGDIADEPENKPSA) is disordered.

This sequence belongs to the monovalent cation:proton antiporter 2 (CPA2) transporter (TC 2.A.37) family. KefC subfamily. In terms of assembly, homodimer. Interacts with the regulatory subunit KefF.

Its subcellular location is the cell inner membrane. Functionally, pore-forming subunit of a potassium efflux system that confers protection against electrophiles. Catalyzes K(+)/H(+) antiport. The sequence is that of Glutathione-regulated potassium-efflux system protein KefC from Klebsiella pneumoniae subsp. pneumoniae (strain ATCC 700721 / MGH 78578).